The following is a 175-amino-acid chain: Ribosome maturation factor RimM (175 aa).

The region spanning 99–172 (EGEFHLLDLV…WLRLTPPPGL (74 aa)) is the PRC barrel domain.

The protein belongs to the RimM family. As to quaternary structure, binds ribosomal protein uS19.

The protein resides in the cytoplasm. In terms of biological role, an accessory protein needed during the final step in the assembly of 30S ribosomal subunit, possibly for assembly of the head region. Essential for efficient processing of 16S rRNA. May be needed both before and after RbfA during the maturation of 16S rRNA. It has affinity for free ribosomal 30S subunits but not for 70S ribosomes. This is Ribosome maturation factor RimM from Synechococcus sp. (strain WH7803).